Consider the following 101-residue polypeptide: MAKQSMKARDVKRVKLAEKFYTKRVELKKIISDVNASDEDRWDAVLKLQTLPRDSSPSRQRNRCRQTGRPHGVLRKFGLSRIKVREAAMRGEIPGLKKASW.

It belongs to the universal ribosomal protein uS14 family. In terms of assembly, part of the 30S ribosomal subunit. Contacts proteins S3 and S10.

Binds 16S rRNA, required for the assembly of 30S particles and may also be responsible for determining the conformation of the 16S rRNA at the A site. The protein is Small ribosomal subunit protein uS14 of Haemophilus influenzae (strain PittGG).